Here is a 64-residue protein sequence, read N- to C-terminus: Conotoxin VnMRCL-04 (64 aa).

Residues 1–22 (MRCLPVFVILLLLIASAPSVDA) form the signal peptide. The propeptide occupies 23–48 (RPKTKDDVPLASFHGNAERTLLNILR). A Tryptophan amide modification is found at Trp63.

Belongs to the conotoxin T superfamily. In terms of processing, contains 2 disulfide bonds that can be either 'C1-C3, C2-C4' or 'C1-C4, C2-C3', since these disulfide connectivities have been observed for conotoxins with cysteine framework V (for examples, see AC P0DQQ7 and AC P81755). Expressed by the venom duct.

It is found in the secreted. The polypeptide is Conotoxin VnMRCL-04 (Conus ventricosus (Mediterranean cone)).